Reading from the N-terminus, the 121-residue chain is Small ribosomal subunit protein uS13 (121 aa).

A disordered region spans residues 91–121; the sequence is HRKGLPMRGQRTRTNARTRKGPRKAGVALKK.

This sequence belongs to the universal ribosomal protein uS13 family. Part of the 30S ribosomal subunit. Forms a loose heterodimer with protein S19. Forms two bridges to the 50S subunit in the 70S ribosome.

Functionally, located at the top of the head of the 30S subunit, it contacts several helices of the 16S rRNA. In the 70S ribosome it contacts the 23S rRNA (bridge B1a) and protein L5 of the 50S subunit (bridge B1b), connecting the 2 subunits; these bridges are implicated in subunit movement. Contacts the tRNAs in the A and P-sites. In Cupriavidus taiwanensis (strain DSM 17343 / BCRC 17206 / CCUG 44338 / CIP 107171 / LMG 19424 / R1) (Ralstonia taiwanensis (strain LMG 19424)), this protein is Small ribosomal subunit protein uS13.